A 1295-amino-acid polypeptide reads, in one-letter code: Phosphoribosylformylglycinamidine synthase (1295 aa).

A disordered region spans residues 305 to 327 (WPGAATGSGGEIRDEGATGRGAK). Residues 307–318 (GAATGSGGEIRD) and alanine 678 contribute to the ATP site. Mg(2+) is bound by residues glutamate 718, asparagine 722, and aspartate 884. Serine 886 provides a ligand contact to ATP. The Glutamine amidotransferase type-1 domain occupies 1042–1295 (VAVLREQGVN…IFRNARKQLG (254 aa)). Cysteine 1135 serves as the catalytic Nucleophile. Active-site residues include histidine 1260 and glutamate 1262.

The protein in the N-terminal section; belongs to the FGAMS family. As to quaternary structure, monomer.

Its subcellular location is the cytoplasm. It catalyses the reaction N(2)-formyl-N(1)-(5-phospho-beta-D-ribosyl)glycinamide + L-glutamine + ATP + H2O = 2-formamido-N(1)-(5-O-phospho-beta-D-ribosyl)acetamidine + L-glutamate + ADP + phosphate + H(+). Its pathway is purine metabolism; IMP biosynthesis via de novo pathway; 5-amino-1-(5-phospho-D-ribosyl)imidazole from N(2)-formyl-N(1)-(5-phospho-D-ribosyl)glycinamide: step 1/2. Phosphoribosylformylglycinamidine synthase involved in the purines biosynthetic pathway. Catalyzes the ATP-dependent conversion of formylglycinamide ribonucleotide (FGAR) and glutamine to yield formylglycinamidine ribonucleotide (FGAM) and glutamate. In Shigella boydii serotype 4 (strain Sb227), this protein is Phosphoribosylformylglycinamidine synthase.